The following is a 588-amino-acid chain: Juvenile hormone esterase (588 aa).

A signal peptide spans 1-23; sequence MKFPKNLFLVLFYTSWKFCDVCA. Asparagine 79 and asparagine 83 each carry an N-linked (GlcNAc...) asparagine glycan. The cysteines at positions 91 and 109 are disulfide-linked. Catalysis depends on serine 214, which acts as the Acyl-ester intermediate. N-linked (GlcNAc...) asparagine glycosylation is present at asparagine 257. Cysteine 268 and cysteine 281 are disulfide-bonded. Glutamate 350 functions as the Charge relay system in the catalytic mechanism. N-linked (GlcNAc...) asparagine glycans are attached at residues asparagine 389, asparagine 396, and asparagine 472. Histidine 479 (charge relay system) is an active-site residue.

The protein belongs to the type-B carboxylesterase/lipase family.

The protein localises to the secreted. It catalyses the reaction juvenile hormone III + H2O = juvenile hormone III carboxylate + methanol + H(+). With respect to regulation, inhibited by 3-octylthio-1,1,1-trifluoro-2-propanone (OTFP), a specific inhibitor of juvenile hormone esterase (JHE), but not by diisopropyl fluorophosphate (DFP), a serine enzyme inhibitor. May function as a juvenile hormone (JH)-specific degradation enzyme in vivo decreasing JH activity. Hydrolyzes JH III in vitro. Hydrolyzes effectively also methyl hepthylthioacetothioate (HEPTAT), a synthetic substrate. Of the general esterase substrates, it has preference for 2-naphthyl acetate (2-NA) and shows a weak activity for 1-NA and 4-nitrophenylacetate (4-NPA). This chain is Juvenile hormone esterase, found in Tribolium castaneum (Red flour beetle).